Here is a 378-residue protein sequence, read N- to C-terminus: GDP-mannose 3,5-epimerase 1 (378 aa).

NAD(+) contacts are provided by residues 36–62 (GAGGFIGSHIARRLKSEGHYIIASDWK), D60, and D80. Substrate is bound by residues G105 and 145 to 147 (SAC). Positions 175 and 179 each coordinate NAD(+). The Proton acceptor role is filled by Y175. Substrate is bound by residues N204, 217 to 219 (EKA), K226, 242 to 244 (QTR), R307, and S357.

Belongs to the NAD(P)-dependent epimerase/dehydratase family. As to quaternary structure, homodimer. The cofactor is NAD(+).

It catalyses the reaction GDP-alpha-D-mannose = GDP-beta-L-gulose. The catalysed reaction is GDP-beta-L-gulose = GDP-beta-L-galactose. It functions in the pathway cofactor biosynthesis; L-ascorbate biosynthesis via GDP-alpha-D-mannose pathway; L-ascorbate from GDP-alpha-D-mannose: step 1/5. In terms of biological role, catalyzes a reversible epimerization of GDP-D-mannose that precedes the committed step in the biosynthesis of vitamin C (L-ascorbate), resulting in the hydrolysis of the highly energetic glycosyl-pyrophosphoryl linkage. Able to catalyze 2 distinct epimerization reactions and can release both GDP-L-galactose and GDP-L-gulose from GDP-mannose. This is GDP-mannose 3,5-epimerase 1 from Oryza sativa subsp. indica (Rice).